Here is a 61-residue protein sequence, read N- to C-terminus: Small ribosomal subunit protein uS14 (61 aa).

Positions 24, 27, 40, and 43 each coordinate Zn(2+).

It belongs to the universal ribosomal protein uS14 family. Zinc-binding uS14 subfamily. As to quaternary structure, part of the 30S ribosomal subunit. Contacts proteins S3 and S10. The cofactor is Zn(2+).

Its function is as follows. Binds 16S rRNA, required for the assembly of 30S particles and may also be responsible for determining the conformation of the 16S rRNA at the A site. The sequence is that of Small ribosomal subunit protein uS14 from Pelobacter propionicus (strain DSM 2379 / NBRC 103807 / OttBd1).